A 321-amino-acid polypeptide reads, in one-letter code: NADPH-dependent codeinone reductase 1-5 (321 aa).

2 residues coordinate NADPH: threonine 27 and aspartate 51. Active-site proton donor residues include tyrosine 56 and histidine 119. A substrate-binding site is contributed by histidine 119. 5 residues coordinate NADPH: glutamine 187, serine 214, leucine 216, serine 264, and arginine 269.

Belongs to the aldo/keto reductase family. As to expression, latex secreting cells (laticifer cells). Expressed constitutively and ubiquitously with highest levels in capsules.

It localises to the cytoplasm. It is found in the cytosol. It carries out the reaction codeine + NADP(+) = codeinone + NADPH + H(+). The enzyme catalyses neopine + NADP(+) = neopinone + NADPH + H(+). The catalysed reaction is morphine + NADP(+) = morphinone + NADPH + H(+). It catalyses the reaction neomorphine + NADP(+) = neomorphinone + NADPH + H(+). It participates in alkaloid biosynthesis; morphine biosynthesis. Functionally, NADPH-dependent codeinone reductase involved in biosynthesis of morphinan-type benzylisoquinoline and opiate alkaloids natural products. Reduces codeinone to codeine in the penultimate step in morphine biosynthesis. Can use morphinone, hydrocodone and hydromorphone as substrate during reductive reaction with NADPH as cofactor, and morphine and dihydrocodeine as substrate during oxidative reaction with NADP as cofactor. Converts morphinone to morphine, and neomorphinone to neomorphine. Reduces irreversibly neopinone, a spontaneous isomer of codeinone, to neopine; in planta, neopine levels are limited to low levels. This is NADPH-dependent codeinone reductase 1-5 from Papaver somniferum (Opium poppy).